The chain runs to 326 residues: uncharacterized protein (326 aa).

Solcar repeat units lie at residues 20-107, 120-219, and 231-322; these read QDSN…CKKK, LTNT…LREF, and KSNL…VCDS. Helical transmembrane passes span 24 to 40, 84 to 104, 126 to 143, 195 to 213, 237 to 254, and 297 to 316; these read IAFLAGGVAGAVSRTVV, GLNCIRIFPYSAVQFVVYEAC, LFSGALCGGCSVVATYPL, VWPTSLGVVPYVALNFAVY, LTIGAISGGVAQTITYPF, and GLAANLFKVVPSTAVSWLVY.

It belongs to the mitochondrial carrier (TC 2.A.29) family.

It localises to the mitochondrion inner membrane. This is an uncharacterized protein from Saccharomyces cerevisiae (strain ATCC 204508 / S288c) (Baker's yeast).